Here is an 874-residue protein sequence, read N- to C-terminus: Chaperone protein ClpB 1 (874 aa).

In terms of domain architecture, Clp R spans 6 to 148 (PNQFTEKAWE…RQIIQQIRGS (143 aa)). Repeat stretches follow at residues 9-73 (FTEK…IARQ) and 85-148 (LGRS…IRGS). Residues 161–342 (EALEKYGRDL…RRFQQVFVDQ (182 aa)) are NBD1. Residue 208–215 (GEPGVGKT) coordinates ATP. Positions 343–551 (PTVEDTISIL…IAEIISKWTG (209 aa)) are linker. Residues 393–527 (IDLVDESAAR…MEGGLATTHT (135 aa)) adopt a coiled-coil conformation. The tract at residues 561-772 (EMQKLLNLDE…RVDETIIFHS (212 aa)) is NBD2. 611-618 (GPTGVGKT) provides a ligand contact to ATP. The tract at residues 773–874 (LRKDQLQQIV…IATPTAVPLS (102 aa)) is C-terminal.

The protein belongs to the ClpA/ClpB family. As to quaternary structure, homohexamer. The oligomerization is ATP-dependent.

It is found in the cytoplasm. Part of a stress-induced multi-chaperone system, it is involved in the recovery of the cell from heat-induced damage, in cooperation with DnaK, DnaJ and GrpE. Acts before DnaK, in the processing of protein aggregates. Protein binding stimulates the ATPase activity; ATP hydrolysis unfolds the denatured protein aggregates, which probably helps expose new hydrophobic binding sites on the surface of ClpB-bound aggregates, contributing to the solubilization and refolding of denatured protein aggregates by DnaK. Necessary for thermotolerance. This is Chaperone protein ClpB 1 (clpB1) from Synechococcus elongatus (strain ATCC 33912 / PCC 7942 / FACHB-805) (Anacystis nidulans R2).